A 119-amino-acid chain; its full sequence is Beta-2-microglobulin (119 aa).

Positions 1 to 20 are cleaved as a signal peptide; sequence MARFVVVALLVLLSLSGLEA. One can recognise an Ig-like C1-type domain in the interval 25–114; it reads PKIQVYSRHP…VTLSTPKTVK (90 aa). A disulfide bond links C45 and C100.

Belongs to the beta-2-microglobulin family. As to quaternary structure, heterodimer of an alpha chain and a beta chain. Beta-2-microglobulin is the beta-chain of major histocompatibility complex class I molecules.

It is found in the secreted. In terms of biological role, component of the class I major histocompatibility complex (MHC). Involved in the presentation of peptide antigens to the immune system. The sequence is that of Beta-2-microglobulin (B2M) from Aotus azarae (Azara's night monkey).